We begin with the raw amino-acid sequence, 659 residues long: Exoribonuclease 2 (659 aa).

Residues 189–531 (RENLTALHFV…NHRLIKAVLA (343 aa)) enclose the RNB domain. In terms of domain architecture, S1 motif spans 576 to 658 (NAEFEAEVQD…ATRSIVGEIL (83 aa)).

Belongs to the RNR ribonuclease family. RNase II subfamily.

It localises to the cytoplasm. The enzyme catalyses Exonucleolytic cleavage in the 3'- to 5'-direction to yield nucleoside 5'-phosphates.. Involved in mRNA degradation. Hydrolyzes single-stranded polyribonucleotides processively in the 3' to 5' direction. The chain is Exoribonuclease 2 from Haemophilus influenzae (strain PittGG).